Here is a 102-residue protein sequence, read N- to C-terminus: Small ribosomal subunit protein uS10 (102 aa).

Belongs to the universal ribosomal protein uS10 family. In terms of assembly, part of the 30S ribosomal subunit.

Involved in the binding of tRNA to the ribosomes. This Sulfurihydrogenibium sp. (strain YO3AOP1) protein is Small ribosomal subunit protein uS10.